The chain runs to 295 residues: MFRGVFPAIITPFKDDGSLDEDGLRRNVEVLSKTGISGVVPCGTTGESATLSHEEHKKVVEIVVDCSDVPVVAGTGSNNTSEAIELTRHAADAGADAALLITPYYNRPNERGLFEHFRKVAESSDIPIVLYNVPKRTGVELRPDVVARLSEISNIVAIKEASGSLTQVSRIIELTADKNFAVLSGDDDLTLPMLALGATGVVSVVANVAPRATVEMVNAFLDGNITRAQELHYRLAPLVRAMFLETNPIPVKTAYRMLGMAAGPLRLPLAPMSDENEAKLRDVLTKMSDLTGDMR.

Pyruvate is bound at residue Thr-45. Tyr-131 serves as the catalytic Proton donor/acceptor. Lys-159 (schiff-base intermediate with substrate) is an active-site residue. Val-202 contacts pyruvate.

Belongs to the DapA family. In terms of assembly, homotetramer; dimer of dimers.

The protein resides in the cytoplasm. It catalyses the reaction L-aspartate 4-semialdehyde + pyruvate = (2S,4S)-4-hydroxy-2,3,4,5-tetrahydrodipicolinate + H2O + H(+). It functions in the pathway amino-acid biosynthesis; L-lysine biosynthesis via DAP pathway; (S)-tetrahydrodipicolinate from L-aspartate: step 3/4. Its function is as follows. Catalyzes the condensation of (S)-aspartate-beta-semialdehyde [(S)-ASA] and pyruvate to 4-hydroxy-tetrahydrodipicolinate (HTPA). This chain is 4-hydroxy-tetrahydrodipicolinate synthase, found in Methanothrix thermoacetophila (strain DSM 6194 / JCM 14653 / NBRC 101360 / PT) (Methanosaeta thermophila).